A 121-amino-acid polypeptide reads, in one-letter code: Inner membrane protein YhaH (121 aa).

Residues 1–23 (MDWYLKVLKNYVGFRGRARRKEY) are Periplasmic-facing. A helical transmembrane segment spans residues 24-44 (WMFILVNIIFTFVLGLLDKML). The Cytoplasmic portion of the chain corresponds to 45 to 49 (GWQRA). The chain crosses the membrane as a helical span at residues 50 to 70 (GGEGILTTIYGILVFLPWWAV). Topologically, residues 71-80 (QFRRLHDTDR) are periplasmic. The chain crosses the membrane as a helical span at residues 81 to 101 (SAWWALLFLIPFIGWLIIIVF). The Cytoplasmic portion of the chain corresponds to 102–121 (NCQAGTPGENRFGPDPKLEP).

To E.coli YhaI.

It localises to the cell inner membrane. This chain is Inner membrane protein YhaH (yhaH), found in Escherichia coli O157:H7.